The primary structure comprises 673 residues: Hemocyanin subunit C (673 aa).

The N-terminal stretch at 1 to 20 (MGAWKVWTFFAIALVVAVKA) is a signal peptide. Cu cation-binding residues include histidine 207, histidine 211, and histidine 237. Asparagine 323 carries N-linked (GlcNAc...) asparagine glycosylation. Cu cation-binding residues include histidine 358, histidine 362, and histidine 398. Cysteine 568 and cysteine 616 are joined by a disulfide.

It belongs to the tyrosinase family. Hemocyanin subfamily. As to quaternary structure, 36-chain polymer consisting of 6 hexamers, each of which includes 4 different chains, A, B, C and D. In terms of tissue distribution, hemolymph.

Its subcellular location is the secreted. The protein localises to the extracellular space. Hemocyanins are copper-containing oxygen carriers occurring freely dissolved in the hemolymph of many mollusks and arthropods. The polypeptide is Hemocyanin subunit C (HCC) (Scutigera coleoptrata (House centipede)).